We begin with the raw amino-acid sequence, 391 residues long: Putative B3 domain-containing protein Os08g0325100 (391 aa).

The segment at residues 32 to 125 (GDFQHEIRGE…QFDVIIFDQV (94 aa)) is a DNA-binding region (TF-B3). Positions 143–232 (VQEGRTDATE…SSRAHPQPMP (90 aa)) are disordered. Positions 172–226 (EGRTNATETLNSSRAHSQPMPMQTPATETLNSSRAHSQDMPMQSPATETLNSSRA) are enriched in polar residues.

The protein resides in the nucleus. This chain is Putative B3 domain-containing protein Os08g0325100, found in Oryza sativa subsp. japonica (Rice).